Consider the following 579-residue polypeptide: Adenine deaminase (579 aa).

This sequence belongs to the metallo-dependent hydrolases superfamily. Adenine deaminase family. It depends on Mn(2+) as a cofactor.

It catalyses the reaction adenine + H2O + H(+) = hypoxanthine + NH4(+). The chain is Adenine deaminase from Listeria innocua serovar 6a (strain ATCC BAA-680 / CLIP 11262).